The chain runs to 94 residues: MSSCPAIVNMKDDDGIGAMGAAVAFAAMGVFGIYFLWPVVGPTSAGMMMKAPGAAGWVICRAVFEANPQLYFTILRTAGAAAAAATFAACSIAS.

Residues 1 to 15 lie on the Cytoplasmic side of the membrane; the sequence is MSSCPAIVNMKDDDG. A helical; Signal-anchor for type II membrane protein transmembrane segment spans residues 16-36; that stretch reads IGAMGAAVAFAAMGVFGIYFL. Over 37 to 94 the chain is Extracellular; that stretch reads WPVVGPTSAGMMMKAPGAAGWVICRAVFEANPQLYFTILRTAGAAAAAATFAACSIAS.

In terms of processing, possible proteolysis of the C-terminal region from the predicted transmembrane domain to permit secretion and transport of the mature protein to the cell walls of the nucellus, allowing the spreading from the egg cell apparatus to the micropylar opening of the ovule. In terms of tissue distribution, expressed only in the egg apparatus, consisting of the egg cell and two synergids. Not detected in the central cell, antipodals, and nucellar and integumental cells.

The protein localises to the membrane. Involved in short-range signaling required for pollen tube attraction by the female gametophyte. Required for female fertility. The protein is Protein EGG APPARATUS-1 (Ea1) of Zea mays (Maize).